The sequence spans 66 residues: Large ribosomal subunit protein bL31 (66 aa).

Zn(2+)-binding residues include C16, C18, C36, and C39.

This sequence belongs to the bacterial ribosomal protein bL31 family. Type A subfamily. In terms of assembly, part of the 50S ribosomal subunit. The cofactor is Zn(2+).

Its function is as follows. Binds the 23S rRNA. The protein is Large ribosomal subunit protein bL31 of Thermodesulfovibrio yellowstonii (strain ATCC 51303 / DSM 11347 / YP87).